Here is a 267-residue protein sequence, read N- to C-terminus: 3-methyl-2-oxobutanoate hydroxymethyltransferase (267 aa).

Mg(2+) is bound by residues aspartate 45 and aspartate 84. 3-methyl-2-oxobutanoate-binding positions include 45–46 (DS), aspartate 84, and lysine 113. Glutamate 115 serves as a coordination point for Mg(2+). The Proton acceptor role is filled by glutamate 182.

This sequence belongs to the PanB family. In terms of assembly, homodecamer; pentamer of dimers. The cofactor is Mg(2+).

It is found in the cytoplasm. The enzyme catalyses 3-methyl-2-oxobutanoate + (6R)-5,10-methylene-5,6,7,8-tetrahydrofolate + H2O = 2-dehydropantoate + (6S)-5,6,7,8-tetrahydrofolate. It participates in cofactor biosynthesis; coenzyme A biosynthesis. In terms of biological role, catalyzes the reversible reaction in which hydroxymethyl group from 5,10-methylenetetrahydrofolate is transferred onto alpha-ketoisovalerate to form ketopantoate. This Saccharolobus islandicus (strain M.16.27) (Sulfolobus islandicus) protein is 3-methyl-2-oxobutanoate hydroxymethyltransferase.